Consider the following 127-residue polypeptide: Small ribosomal subunit protein bS6 (127 aa).

The disordered stretch occupies residues 99–127 (PLPAPRVVPGSEPAAAPQEQPAANSEAAS). Residues 109–127 (SEPAAAPQEQPAANSEAAS) are compositionally biased toward low complexity.

It belongs to the bacterial ribosomal protein bS6 family.

Functionally, binds together with bS18 to 16S ribosomal RNA. The polypeptide is Small ribosomal subunit protein bS6 (Parasynechococcus marenigrum (strain WH8102)).